The chain runs to 418 residues: Putative competence-damage inducible protein (418 aa).

It belongs to the CinA family.

In Streptococcus gordonii (strain Challis / ATCC 35105 / BCRC 15272 / CH1 / DL1 / V288), this protein is Putative competence-damage inducible protein.